Reading from the N-terminus, the 402-residue chain is Pyridinium-3,5-bisthiocarboxylic acid mononucleotide nickel insertion protein (402 aa).

The protein belongs to the LarC family.

It carries out the reaction Ni(II)-pyridinium-3,5-bisthiocarboxylate mononucleotide = pyridinium-3,5-bisthiocarboxylate mononucleotide + Ni(2+). In terms of biological role, involved in the biosynthesis of a nickel-pincer cofactor ((SCS)Ni(II) pincer complex). Binds Ni(2+), and functions in nickel delivery to pyridinium-3,5-bisthiocarboxylic acid mononucleotide (P2TMN), to form the mature cofactor. Is thus probably required for the activation of nickel-pincer cofactor-dependent enzymes. The polypeptide is Pyridinium-3,5-bisthiocarboxylic acid mononucleotide nickel insertion protein (Desulfitobacterium hafniense (strain DSM 10664 / DCB-2)).